The sequence spans 245 residues: Ribonuclease 3 (245 aa).

The RNase III domain maps to 19–148 (FKVFQEKIGI…FIGALYLDQG (130 aa)). Residue Glu-61 participates in Mg(2+) binding. The active site involves Asp-65. Mg(2+) is bound by residues Asp-134 and Glu-137. Residue Glu-137 is part of the active site. The region spanning 174-243 (DYKSQLQELI…AAEALKKLKE (70 aa)) is the DRBM domain.

Belongs to the ribonuclease III family. As to quaternary structure, homodimer. It depends on Mg(2+) as a cofactor.

The protein localises to the cytoplasm. It carries out the reaction Endonucleolytic cleavage to 5'-phosphomonoester.. Digests double-stranded RNA. Involved in the processing of primary rRNA transcript to yield the immediate precursors to the large and small rRNAs (23S and 16S). Processes some mRNAs, and tRNAs when they are encoded in the rRNA operon. Processes pre-crRNA and tracrRNA of type II CRISPR loci if present in the organism. The protein is Ribonuclease 3 of Bacillus cereus (strain ZK / E33L).